Reading from the N-terminus, the 328-residue chain is Flap endonuclease 1 (328 aa).

The N-domain stretch occupies residues 1–98 (MGVKFKDITN…ETQEERINIK (98 aa)). Mg(2+) is bound by residues Asp27, Asp80, Glu152, Glu154, Asp173, Asp175, and Asp227. The tract at residues 116-248 (AARKYAARTT…KGIKLIHKYG (133 aa)) is I-domain. Residues 320–328 (AQSSLEDWF) are interaction with PCNA.

It belongs to the XPG/RAD2 endonuclease family. FEN1 subfamily. As to quaternary structure, interacts with PCNA. PCNA stimulates the nuclease activity without altering cleavage specificity. The cofactor is Mg(2+).

Structure-specific nuclease with 5'-flap endonuclease and 5'-3' exonuclease activities involved in DNA replication and repair. During DNA replication, cleaves the 5'-overhanging flap structure that is generated by displacement synthesis when DNA polymerase encounters the 5'-end of a downstream Okazaki fragment. Binds the unpaired 3'-DNA end and kinks the DNA to facilitate 5' cleavage specificity. Cleaves one nucleotide into the double-stranded DNA from the junction in flap DNA, leaving a nick for ligation. Also involved in the base excision repair (BER) pathway. Acts as a genome stabilization factor that prevents flaps from equilibrating into structures that lead to duplications and deletions. Also possesses 5'-3' exonuclease activity on nicked or gapped double-stranded DNA. The protein is Flap endonuclease 1 of Methanosphaera stadtmanae (strain ATCC 43021 / DSM 3091 / JCM 11832 / MCB-3).